Here is a 419-residue protein sequence, read N- to C-terminus: Keratin, type I cytoskeletal 47 kDa (419 aa).

The segment at 1–81 is head; sequence MSFRSSSSYS…SSSFSNFGGN (81 aa). The coil 1A stretch occupies residues 82-117; the sequence is DKQTMQNLNDRLASYLEKVRALEAANADLELKIREW. An IF rod domain is found at 82-397; that stretch reads DKQTMQNLND…RLLEGEFGSL (316 aa). The interval 118 to 139 is linker 1; it reads YEKQKGSGIGAGSKDFSKYFEI. Positions 140–231 are coil 1B; it reads ISDLRNKILS…KNHEEEMSIA (92 aa). A linker 12 region spans residues 232-254; it reads KSSSAGQVNVEMDAAPGIDLNKI. The tract at residues 255 to 393 is coil 2; the sequence is LSDMRADYET…ETYRRLLEGE (139 aa). The interval 394 to 419 is tail; the sequence is FGSLKSSIVQATEVSTSQSSSSSKKD.

It belongs to the intermediate filament family. In terms of assembly, heterotetramer of two type I and two type II keratins.

The protein is Keratin, type I cytoskeletal 47 kDa (xk81b2) of Xenopus laevis (African clawed frog).